Consider the following 313-residue polypeptide: Protoheme IX farnesyltransferase (313 aa).

9 helical membrane-spanning segments follow: residues Phe-22–Met-42, Ile-46–Ala-66, Gly-98–Ala-118, Val-121–Trp-141, Ile-150–Gly-170, Trp-177–Phe-197, Ile-223–Gly-243, Ile-246–Trp-266, and Phe-284–Leu-304.

The protein belongs to the UbiA prenyltransferase family. Protoheme IX farnesyltransferase subfamily. As to quaternary structure, interacts with CtaA.

It is found in the cell inner membrane. It catalyses the reaction heme b + (2E,6E)-farnesyl diphosphate + H2O = Fe(II)-heme o + diphosphate. Its pathway is porphyrin-containing compound metabolism; heme O biosynthesis; heme O from protoheme: step 1/1. Converts heme B (protoheme IX) to heme O by substitution of the vinyl group on carbon 2 of heme B porphyrin ring with a hydroxyethyl farnesyl side group. This Ruegeria sp. (strain TM1040) (Silicibacter sp.) protein is Protoheme IX farnesyltransferase.